Here is a 278-residue protein sequence, read N- to C-terminus: Small ribosomal subunit protein uS3 (278 aa).

The 69-residue stretch at 39 to 107 (LRKAIAKKYV…KVQLNIVEIS (69 aa)) folds into the KH type-2 domain. The disordered stretch occupies residues 244 to 278 (AKPKRVTKKAEAEASAEEKPKRAAKKAENITKEEE). Over residues 251–278 (KKAEAEASAEEKPKRAAKKAENITKEEE) the composition is skewed to basic and acidic residues.

The protein belongs to the universal ribosomal protein uS3 family. In terms of assembly, part of the 30S ribosomal subunit. Forms a tight complex with proteins S10 and S14.

In terms of biological role, binds the lower part of the 30S subunit head. Binds mRNA in the 70S ribosome, positioning it for translation. The protein is Small ribosomal subunit protein uS3 of Dehalococcoides mccartyi (strain ATCC BAA-2266 / KCTC 15142 / 195) (Dehalococcoides ethenogenes (strain 195)).